A 68-amino-acid polypeptide reads, in one-letter code: Conotoxin Ar5.3 (68 aa).

Residues 1–19 (MLCLPVFIILLLLASPAAS) form the signal peptide. Residues 20 to 53 (NPLEKRIQNDLIRAALEDADMENDPRSIIDSVKT) constitute a propeptide that is removed on maturation.

It belongs to the conotoxin T superfamily. Contains 2 disulfide bonds that can be either 'C1-C3, C2-C4' or 'C1-C4, C2-C3', since these disulfide connectivities have been observed for conotoxins with cysteine framework V (for examples, see AC P0DQQ7 and AC P81755). As to expression, expressed by the venom duct.

It localises to the secreted. The chain is Conotoxin Ar5.3 from Conus arenatus (Sand-dusted cone).